Consider the following 226-residue polypeptide: Late protein I226R (226 aa).

Residues 1–16 form the signal peptide; that stretch reads MKMETFLVCLFHNADG. N-linked (GlcNAc...) asparagine; by host glycans are attached at residues N142 and N164.

This sequence belongs to the asfivirus I226R family.

Plays a role in the inhibition of host NF-kappa-B and IRF3 signaling pathways. Mechanistically, promotes the degradation of host IKBKG through enhancing its ubiquitination leading to inhibition of both pathways. The chain is Late protein I226R from African swine fever virus (isolate Warthog/Namibia/Wart80/1980) (ASFV).